The sequence spans 291 residues: ATP synthase gamma chain (291 aa).

The protein belongs to the ATPase gamma chain family. F-type ATPases have 2 components, CF(1) - the catalytic core - and CF(0) - the membrane proton channel. CF(1) has five subunits: alpha(3), beta(3), gamma(1), delta(1), epsilon(1). CF(0) has three main subunits: a, b and c.

Its subcellular location is the cell inner membrane. Functionally, produces ATP from ADP in the presence of a proton gradient across the membrane. The gamma chain is believed to be important in regulating ATPase activity and the flow of protons through the CF(0) complex. The polypeptide is ATP synthase gamma chain (Ruegeria sp. (strain TM1040) (Silicibacter sp.)).